Here is a 222-residue protein sequence, read N- to C-terminus: UPF0758 protein YicR (222 aa).

Positions 100–222 (PLLSPEMTRE…YVSFAERGWI (123 aa)) constitute an MPN domain. Zn(2+)-binding residues include H171, H173, and D184. Residues 171–184 (HNHPSGCAEPSKAD) carry the JAMM motif motif.

The protein belongs to the UPF0758 family. YicR subfamily.

The polypeptide is UPF0758 protein YicR (Escherichia coli O45:K1 (strain S88 / ExPEC)).